A 508-amino-acid polypeptide reads, in one-letter code: Cyclic AMP-responsive element-binding protein 5 (508 aa).

The C2H2-type zinc finger occupies 16–40; it reads FVCSAPGCSQRFPTEDHLMIHRHKH. Residue K50 forms a Glycyl lysine isopeptide (Lys-Gly) (interchain with G-Cter in SUMO2) linkage. Residues T59 and T61 each carry the phosphothreonine modification. Position 137 is a phosphoserine (S137). A disordered region spans residues 265–391; sequence RQDQTPHHHM…LERNRAAATR (127 aa). 2 stretches are compositionally biased toward basic residues: residues 271-280 and 289-326; these read HHHMHSHPHQ and PYPH…HPAH. Polar residues predominate over residues 337–346; sequence TGNQAQVSPA. A compositionally biased stretch (low complexity) spans 347 to 357; the sequence is TQQMQPTQTIQ. Residues 369 to 386 are compositionally biased toward basic and acidic residues; it reads VVDEDPDERRRKFLERNR. Positions 375-438 constitute a bZIP domain; that stretch reads DERRRKFLER…AQLKQLLLTH (64 aa). A basic motif region spans residues 377 to 397; sequence RRRKFLERNRAAATRCRQKRK. A leucine-zipper region spans residues 403 to 431; that stretch reads LEKKAEELTQTNMQLQNEVSMLKNEVAQL. The tract at residues 449–468 is disordered; that stretch reads ESQGYLSPESSPPASPVPAC.

It belongs to the bZIP family. In terms of assembly, binds DNA as a homodimer or as a heterodimer with JUN or ATF2/CREBP1.

Its subcellular location is the nucleus. In terms of biological role, binds to the cAMP response element and activates transcription. This is Cyclic AMP-responsive element-binding protein 5 (CREB5) from Homo sapiens (Human).